We begin with the raw amino-acid sequence, 91 residues long: ATP-dependent Clp protease adapter protein ClpS (91 aa).

The protein belongs to the ClpS family. Binds to the N-terminal domain of the chaperone ClpA.

Its function is as follows. Involved in the modulation of the specificity of the ClpAP-mediated ATP-dependent protein degradation. This Helicobacter pylori (strain ATCC 700392 / 26695) (Campylobacter pylori) protein is ATP-dependent Clp protease adapter protein ClpS.